The sequence spans 386 residues: Glucose-1-phosphate adenylyltransferase (386 aa).

Residues Tyr100, Gly165, 180–181 (EK), and Ser191 each bind alpha-D-glucose 1-phosphate.

It belongs to the bacterial/plant glucose-1-phosphate adenylyltransferase family. Homotetramer.

The catalysed reaction is alpha-D-glucose 1-phosphate + ATP + H(+) = ADP-alpha-D-glucose + diphosphate. Its pathway is glycan biosynthesis; glycogen biosynthesis. In terms of biological role, involved in the biosynthesis of ADP-glucose, a building block required for the elongation reactions to produce glycogen. Catalyzes the reaction between ATP and alpha-D-glucose 1-phosphate (G1P) to produce pyrophosphate and ADP-Glc. The sequence is that of Glucose-1-phosphate adenylyltransferase from Clostridium botulinum (strain Eklund 17B / Type B).